Here is an 87-residue protein sequence, read N- to C-terminus: Small ribosomal subunit protein bS18 (87 aa).

Residues 1-10 (MAGKSSGDRR) are compositionally biased toward basic and acidic residues. The disordered stretch occupies residues 1–23 (MAGKSSGDRRKPLRGAKGGKNAA).

The protein belongs to the bacterial ribosomal protein bS18 family. Part of the 30S ribosomal subunit. Forms a tight heterodimer with protein bS6.

In terms of biological role, binds as a heterodimer with protein bS6 to the central domain of the 16S rRNA, where it helps stabilize the platform of the 30S subunit. The sequence is that of Small ribosomal subunit protein bS18 from Clavibacter michiganensis subsp. michiganensis (strain NCPPB 382).